The following is a 422-amino-acid chain: Enolase (422 aa).

Residue Gln161 participates in (2R)-2-phosphoglycerate binding. The active-site Proton donor is Glu203. Residues Asp240, Glu283, and Asp310 each contribute to the Mg(2+) site. (2R)-2-phosphoglycerate-binding residues include Lys335, Arg364, Ser365, and Lys386. Lys335 acts as the Proton acceptor in catalysis.

It belongs to the enolase family. It depends on Mg(2+) as a cofactor.

The protein resides in the cytoplasm. It localises to the secreted. It is found in the cell surface. It carries out the reaction (2R)-2-phosphoglycerate = phosphoenolpyruvate + H2O. The protein operates within carbohydrate degradation; glycolysis; pyruvate from D-glyceraldehyde 3-phosphate: step 4/5. Catalyzes the reversible conversion of 2-phosphoglycerate (2-PG) into phosphoenolpyruvate (PEP). It is essential for the degradation of carbohydrates via glycolysis. The chain is Enolase from Deinococcus geothermalis (strain DSM 11300 / CIP 105573 / AG-3a).